A 212-amino-acid chain; its full sequence is Deoxyribose-phosphate aldolase (212 aa).

The Proton donor/acceptor role is filled by D89. The Schiff-base intermediate with acetaldehyde role is filled by K151. K180 acts as the Proton donor/acceptor in catalysis.

Belongs to the DeoC/FbaB aldolase family. DeoC type 1 subfamily.

It is found in the cytoplasm. The catalysed reaction is 2-deoxy-D-ribose 5-phosphate = D-glyceraldehyde 3-phosphate + acetaldehyde. Its pathway is carbohydrate degradation; 2-deoxy-D-ribose 1-phosphate degradation; D-glyceraldehyde 3-phosphate and acetaldehyde from 2-deoxy-alpha-D-ribose 1-phosphate: step 2/2. Catalyzes a reversible aldol reaction between acetaldehyde and D-glyceraldehyde 3-phosphate to generate 2-deoxy-D-ribose 5-phosphate. This is Deoxyribose-phosphate aldolase from Clostridium botulinum (strain ATCC 19397 / Type A).